Reading from the N-terminus, the 206-residue chain is Large ribosomal subunit protein uL4 (206 aa).

The disordered stretch occupies residues 43–78; the sequence is ARSGNRKQKDREEVKHTTKKPWRQKGTGRARAGMSS. Residues 49 to 58 show a composition bias toward basic and acidic residues; the sequence is KQKDREEVKH. Basic residues predominate over residues 59-70; it reads TTKKPWRQKGTG.

This sequence belongs to the universal ribosomal protein uL4 family. As to quaternary structure, part of the 50S ribosomal subunit.

Its function is as follows. One of the primary rRNA binding proteins, this protein initially binds near the 5'-end of the 23S rRNA. It is important during the early stages of 50S assembly. It makes multiple contacts with different domains of the 23S rRNA in the assembled 50S subunit and ribosome. Functionally, forms part of the polypeptide exit tunnel. The protein is Large ribosomal subunit protein uL4 of Cupriavidus metallidurans (strain ATCC 43123 / DSM 2839 / NBRC 102507 / CH34) (Ralstonia metallidurans).